Here is a 470-residue protein sequence, read N- to C-terminus: FAD-dependent monooxygenase dpchE (470 aa).

The N-terminal stretch at 1–24 (MSEPHFKVIIVGGSITGLTLAHSL) is a signal peptide. The FAD site is built by Glu-35, Gly-49, and Arg-108. Asn-128 is a glycosylation site (N-linked (GlcNAc...) asparagine). Residue Arg-193 is part of the active site. The FAD site is built by Asp-312 and Ala-325. Residues 447-463 (WAVVSRSVLLLVGLAIL) form a helical membrane-spanning segment.

It belongs to the paxM FAD-dependent monooxygenase family. FAD is required as a cofactor.

The protein resides in the membrane. It functions in the pathway secondary metabolite biosynthesis; terpenoid biosynthesis. FAD-dependent monooxygenase; part of the gene cluster that mediates the biosynthesis of the diterpenoid pyrones higginsianins A and B. The first step of the pathway is the synthesis of the alpha-pyrone moiety by the polyketide synthase dpchA via condensation of one acetyl-CoA starter unit with 3 malonyl-CoA units and 2 methylations. The alpha-pyrone is then combined with geranylgeranyl pyrophosphate (GGPP) formed by the GGPP synthase dpchD through the action of the prenyltransferase dpchC to yield a linear alpha-pyrone diterpenoid. Subsequent steps in the diterpenoid pyrone biosynthetic pathway involve the decalin core formation, which is initiated by the epoxidation of the C10-C11 olefin by the FAD-dependent oxidoreductase dpchE, and is followed by a cyclization cascade catalyzed by the terpene cyclase dpchB. The short chain dehydrogenase/reductase dpchG then oxidizes the 8S hydroxy group to a ketone and the short chain dehydrogenase/reductase dpchH reduces the ketone to the 8R hydroxy group to yield higginsianin B. Finally, the FAD-dependent oxidoreductase dpchF converts higginsianin B into higginsianin A. This chain is FAD-dependent monooxygenase dpchE, found in Colletotrichum higginsianum (strain IMI 349063) (Crucifer anthracnose fungus).